The sequence spans 452 residues: Putrescine hydroxycinnamoyltransferase (452 aa).

Histidine 151 (proton acceptor) is an active-site residue. The interval 213–234 is disordered; the sequence is PAAGVDGDVGGDHKQQHGHGGE. The segment covering 222–234 has biased composition (basic and acidic residues); that stretch reads GGDHKQQHGHGGE. The active-site Proton acceptor is aspartate 398.

Belongs to the plant acyltransferase family. As to expression, highly expressed in roots. Expressed at low levels in flowers.

Hydroxycinnamoyl transferase that catalyzes the transfer of an acyl from p-coumaryol-CoA to putrescine, to produce coumaroyl putrescine. Can use feruloyl-CoA, caffeoyl-CoA and sinapoyl-CoA as acyl donors. Seems to be able to transfer the acyl group from feruloyl-CoA to the acyl acceptors agmatine and spermidine. The chain is Putrescine hydroxycinnamoyltransferase from Oryza sativa subsp. japonica (Rice).